Here is a 452-residue protein sequence, read N- to C-terminus: GTPase Der (452 aa).

EngA-type G domains are found at residues 4–169 (PIVA…PAPQ) and 177–352 (IKVA…QEHR). Residues 10-17 (GRPNVGKS), 57-61 (DTGGL), 120-123 (NKCE), 183-190 (GRPNVGKS), 230-234 (DTAGI), and 295-298 (NKWD) contribute to the GTP site. One can recognise a KH-like domain in the interval 353-439 (RRVTTAVINE…IRLFWRGKKV (87 aa)).

This sequence belongs to the TRAFAC class TrmE-Era-EngA-EngB-Septin-like GTPase superfamily. EngA (Der) GTPase family. Associates with the 50S ribosomal subunit.

In terms of biological role, GTPase that plays an essential role in the late steps of ribosome biogenesis. The chain is GTPase Der from Synechocystis sp. (strain ATCC 27184 / PCC 6803 / Kazusa).